A 400-amino-acid polypeptide reads, in one-letter code: Bifunctional enzyme IspD/IspF (400 aa).

The segment at 1-240 is 2-C-methyl-D-erythritol 4-phosphate cytidylyltransferase; sequence MQESTMKFGI…EKLSHALPDV (240 aa). The segment at 241–400 is 2-C-methyl-D-erythritol 2,4-cyclodiphosphate synthase; the sequence is RTGNGYDVHQ…ATVVYQGRPL (160 aa). Asp247 and His249 together coordinate a divalent metal cation. Residues 247–249 and 273–274 each bind 4-CDP-2-C-methyl-D-erythritol 2-phosphate; these read DVH and HS. His281 provides a ligand contact to a divalent metal cation. 4-CDP-2-C-methyl-D-erythritol 2-phosphate is bound by residues 295-297, 371-374, Phe378, and Arg381; these read DIG and TTNE.

In the N-terminal section; belongs to the IspD/TarI cytidylyltransferase family. IspD subfamily. The protein in the C-terminal section; belongs to the IspF family. A divalent metal cation is required as a cofactor.

The catalysed reaction is 2-C-methyl-D-erythritol 4-phosphate + CTP + H(+) = 4-CDP-2-C-methyl-D-erythritol + diphosphate. The enzyme catalyses 4-CDP-2-C-methyl-D-erythritol 2-phosphate = 2-C-methyl-D-erythritol 2,4-cyclic diphosphate + CMP. It participates in isoprenoid biosynthesis; isopentenyl diphosphate biosynthesis via DXP pathway; isopentenyl diphosphate from 1-deoxy-D-xylulose 5-phosphate: step 2/6. The protein operates within isoprenoid biosynthesis; isopentenyl diphosphate biosynthesis via DXP pathway; isopentenyl diphosphate from 1-deoxy-D-xylulose 5-phosphate: step 4/6. In terms of biological role, bifunctional enzyme that catalyzes the formation of 4-diphosphocytidyl-2-C-methyl-D-erythritol from CTP and 2-C-methyl-D-erythritol 4-phosphate (MEP) (IspD), and catalyzes the conversion of 4-diphosphocytidyl-2-C-methyl-D-erythritol 2-phosphate (CDP-ME2P) to 2-C-methyl-D-erythritol 2,4-cyclodiphosphate (ME-CPP) with a corresponding release of cytidine 5-monophosphate (CMP) (IspF). The protein is Bifunctional enzyme IspD/IspF of Agrobacterium fabrum (strain C58 / ATCC 33970) (Agrobacterium tumefaciens (strain C58)).